The following is a 25-amino-acid chain: Ranatuerin-1C (25 aa).

Residues Cys19 and Cys25 are joined by a disulfide bond.

As to expression, expressed by the skin glands.

Its subcellular location is the secreted. Functionally, antibacterial activity against Gram-positive bacterium S.aureus (MIC=55 uM) and Gram-negative bacterium E.coli (MIC=1.5 uM). Has activity against C.albicans (MIC=58 uM). This chain is Ranatuerin-1C, found in Lithobates clamitans (Green frog).